Consider the following 88-residue polypeptide: Large ribosomal subunit protein bL27 (88 aa).

Residues 1–21 (MAHKKGASSSRNGRDSAAQRL) form a disordered region.

Belongs to the bacterial ribosomal protein bL27 family.

This chain is Large ribosomal subunit protein bL27, found in Mycobacterium marinum (strain ATCC BAA-535 / M).